Reading from the N-terminus, the 319-residue chain is NADH-ubiquinone oxidoreductase chain 1 (319 aa).

8 helical membrane passes run 3–23, 74–94, 106–126, 149–169, 175–195, 226–246, 254–274, and 294–314; these read LITL…AMAF, LFLL…IPLP, ILFI…SGWA, TLGL…LTTF, AVWL…STLA, LFFL…TILF, LTIN…FLWV, and FLPL…SMAG.

Belongs to the complex I subunit 1 family.

The protein resides in the mitochondrion inner membrane. It carries out the reaction a ubiquinone + NADH + 5 H(+)(in) = a ubiquinol + NAD(+) + 4 H(+)(out). In terms of biological role, core subunit of the mitochondrial membrane respiratory chain NADH dehydrogenase (Complex I) that is believed to belong to the minimal assembly required for catalysis. Complex I functions in the transfer of electrons from NADH to the respiratory chain. The immediate electron acceptor for the enzyme is believed to be ubiquinone. In Polypterus ornatipinnis (Ornate bichir), this protein is NADH-ubiquinone oxidoreductase chain 1 (MT-ND1).